Here is a 406-residue protein sequence, read N- to C-terminus: MDNKPAQERRETWVPGAVIVGAGPSGLAAAACLAARGVPATVLERSDSLASTWRHRMYDRLALHLPKRFCELPLLPFPEEYPTYPSKDQFVAYMEAYAAAAGVAPRFGATVEEAAFDAAVGAWRVRLDGGEVLMARWLVVATGENAEPRVPDFPGMQKFAGCAMHTSEYKSGEQFAGKKVLVVGCGNSGMEVSLDLCRHGAKPSMVVRNTVHVLPREMFGLSTFGIAMALLRWLPVQLVDRFLLTAAHLILGNTGQFGLRRPKTGPIELKNLTGRTPVLDVGTLDHIKSGKIKVVGAVKEMTRQGVRFTDGKEEQFDTIILATGYRSNVPSWLKDAGDLFTREGISKVPFPNSWRGRNGLYTVGFTQRGLLGTSSDALNVAKDIHCQWRERDRSAINVLEISNSSF.

21–26 (GAGPSG) is a binding site for FAD. 184 to 189 (GCGNSG) lines the NADP(+) pocket.

This sequence belongs to the FMO family. Requires FAD as cofactor. As to expression, expressed in coleoptile tips, root tips, leaf blade tips, shoot apical meristem, vasculature of stems and flowers.

The catalysed reaction is indole-3-pyruvate + NADPH + O2 + H(+) = (indol-3-yl)acetate + CO2 + NADP(+) + H2O. Involved in auxin biosynthesis. Converts the indole-3-pyruvic acid (IPA) produced by the TAA family to indole-3-acetic acid (IAA). Functions downstream of TAR2 in auxin biosynthesis. Functions upstream of WOX11, a transcription factor that promotes the development of crown roots. The protein is Indole-3-pyruvate monooxygenase YUCCA1 of Oryza sativa subsp. japonica (Rice).